A 226-amino-acid polypeptide reads, in one-letter code: MITSVYAKIEYVTNTKMLFVANNWGYWVNVKPNSGFSRTDNNVLVFLHELTFLAQNNAINKELYAFKSLKEKEWFKALLTINGIGPKTAMNVMVNKQEEVLTLIKNNDLNGLLRLENINKKVATMLLASDIASKHYLKNQIVVSDKVEPQIDDDEKIDDSKDLNDDELLSEIVIEAIDCLISLGYKQEQIKTALAEIDLKNESINDSADLVAVIIKQIGLRTSEVS.

Residues 1–67 (MITSVYAKIE…AINKELYAFK (67 aa)) form a domain I region. Positions 68–145 (SLKEKEWFKA…YLKNQIVVSD (78 aa)) are domain II. The segment at 146–167 (KVEPQIDDDEKIDDSKDLNDDE) is flexible linker. Residues 168-226 (LLSEIVIEAIDCLISLGYKQEQIKTALAEIDLKNESINDSADLVAVIIKQIGLRTSEVS) are domain III.

The protein belongs to the RuvA family. As to quaternary structure, homotetramer. Forms an RuvA(8)-RuvB(12)-Holliday junction (HJ) complex. HJ DNA is sandwiched between 2 RuvA tetramers; dsDNA enters through RuvA and exits via RuvB. An RuvB hexamer assembles on each DNA strand where it exits the tetramer. Each RuvB hexamer is contacted by two RuvA subunits (via domain III) on 2 adjacent RuvB subunits; this complex drives branch migration. In the full resolvosome a probable DNA-RuvA(4)-RuvB(12)-RuvC(2) complex forms which resolves the HJ.

Its subcellular location is the cytoplasm. Functionally, the RuvA-RuvB-RuvC complex processes Holliday junction (HJ) DNA during genetic recombination and DNA repair, while the RuvA-RuvB complex plays an important role in the rescue of blocked DNA replication forks via replication fork reversal (RFR). RuvA specifically binds to HJ cruciform DNA, conferring on it an open structure. The RuvB hexamer acts as an ATP-dependent pump, pulling dsDNA into and through the RuvAB complex. HJ branch migration allows RuvC to scan DNA until it finds its consensus sequence, where it cleaves and resolves the cruciform DNA. This is Holliday junction branch migration complex subunit RuvA from Mycoplasmoides gallisepticum (strain R(low / passage 15 / clone 2)) (Mycoplasma gallisepticum).